The sequence spans 441 residues: Trigger factor (441 aa).

Residues 163–248 enclose the PPIase FKBP-type domain; sequence GDQVVFDFVG…IKEVKKPVPA (86 aa).

The protein belongs to the FKBP-type PPIase family. Tig subfamily.

The protein resides in the cytoplasm. It carries out the reaction [protein]-peptidylproline (omega=180) = [protein]-peptidylproline (omega=0). Functionally, involved in protein export. Acts as a chaperone by maintaining the newly synthesized protein in an open conformation. Functions as a peptidyl-prolyl cis-trans isomerase. The sequence is that of Trigger factor from Jannaschia sp. (strain CCS1).